We begin with the raw amino-acid sequence, 294 residues long: Non-selective voltage-gated ion channel VDAC2 (294 aa).

An N-acetylalanine modification is found at A2. Residues K23 and K31 each coordinate ATP. At K31 the chain carries N6-acetyllysine; alternate. An N6-succinyllysine; alternate modification is found at K31. K31 is covalently cross-linked (Glycyl lysine isopeptide (Lys-Gly) (interchain with G-Cter in ubiquitin); alternate). Beta stranded transmembrane passes span 37–46 (LVKLDVKTKS) and 50–58 (VEFSTSGSS). K64 participates in a covalent cross-link: Glycyl lysine isopeptide (Lys-Gly) (interchain with G-Cter in ubiquitin). Residues 65–75 (VTGTLETKYKW) traverse the membrane as a beta stranded segment. A Phosphotyrosine modification is found at Y78. The next 3 membrane-spanning stretches (beta stranded) occupy residues 80–87 (LTFTEKWN), 91–100 (TLGTEIAIED), and 106–115 (LKLTFDTTFS). Position 118 is a phosphothreonine (T118). K120 bears the N6-acetyllysine; alternate mark. K120 participates in a covalent cross-link: Glycyl lysine isopeptide (Lys-Gly) (interchain with G-Cter in ubiquitin); alternate. K121 participates in a covalent cross-link: Glycyl lysine isopeptide (Lys-Gly) (interchain with G-Cter in ubiquitin). Transmembrane regions (beta stranded) follow at residues 122–131 (SGKIKSSYKR), 134–141 (VNLGCDVD), 148–156 (AIHGSAVFG), and 161–169 (LAGYQMTFD). Residue K172 forms a Glycyl lysine isopeptide (Lys-Gly) (interchain with G-Cter in ubiquitin) linkage. The next 6 membrane-spanning stretches (beta stranded) occupy residues 174 to 186 (KLTR…GYRT), 189 to 196 (FQLHTNVN), 200 to 209 (EFGGSIYQKV), 213 to 222 (LDTSVNLAWT), 229 to 238 (RFGIAAKYQL), and 242 to 249 (ASISAKVN). A Phosphoserine modification is found at S251. NAD(+) contacts are provided by residues 253 to 255 (LIG) and 271 to 275 (SALVD). Transmembrane regions (beta stranded) follow at residues 253–262 (LIGVGYTQTL) and 265–274 (GVKLTLSALV). At K277 the chain carries N6-acetyllysine; alternate. A Glycyl lysine isopeptide (Lys-Gly) (interchain with G-Cter in ubiquitin); alternate cross-link involves residue K277. A beta stranded membrane pass occupies residues 284–293 (HKLGLALELE).

Belongs to the eukaryotic mitochondrial porin family. As to quaternary structure, monomer, homodimer and higher order oligomers; formation of higher order structures is necessary for scramblase activity. Interacts with ARMC12 in a TBC1D21-dependent manner. Interacts with KLC3. Interacts with SPATA33. Interacts with PPP3CC in a SPATA33-dependent manner. Ubiquitinated by PRKN during mitophagy, leading to its degradation and enhancement of mitophagy. Deubiquitinated by USP30.

It localises to the mitochondrion outer membrane. The protein localises to the membrane. It carries out the reaction chloride(in) = chloride(out). It catalyses the reaction K(+)(in) = K(+)(out). The enzyme catalyses a 1,2-diacyl-sn-glycero-3-phospho-L-serine(in) = a 1,2-diacyl-sn-glycero-3-phospho-L-serine(out). The catalysed reaction is a 1,2-diacyl-sn-glycero-3-phosphocholine(in) = a 1,2-diacyl-sn-glycero-3-phosphocholine(out). It carries out the reaction a 1,2-diacyl-sn-glycero-3-phospho-(1D-myo-inositol)(in) = a 1,2-diacyl-sn-glycero-3-phospho-(1D-myo-inositol)(out). Its function is as follows. Non-selective voltage-gated ion channel that mediates the transport of anions and cations through the mitochondrion outer membrane and plasma membrane. The channel adopts an open conformation at zero mV and a closed conformation at both positive and negative potentials. There are two populations of channels; the main that functions in a lower open-state conductance with lower ion selectivity, that switch, in a voltage-dependent manner, from the open to a low-conducting 'closed' state and the other that has a normal ion selectivity in the typical high conductance, 'open' state. Binds various lipids, including the sphingolipid ceramide, the phospholipid phosphatidylcholine, and the sterols cholesterol and oxysterol. Binding of ceramide promotes the mitochondrial outer membrane permeabilization (MOMP) apoptotic pathway. In terms of biological role, catalyzes the scrambling of phospholipids across the outer mitochondrial membrane; the mechanism is unrelated to channel activity and is capable of translocating both anionic and zwitterionic phospholipids. The chain is Non-selective voltage-gated ion channel VDAC2 from Sus scrofa (Pig).